Here is a 148-residue protein sequence, read N- to C-terminus: Hemoglobin subunit beta-2 (148 aa).

The Globin domain occupies 3 to 148 (EWTDAERTAI…VVSALCRQYH (146 aa)). Residues H64 and H93 each coordinate heme b.

In terms of assembly, heterotetramer of two alpha chains and two beta chains. As to expression, red blood cells.

Involved in oxygen transport from gills to the various peripheral tissues. The chain is Hemoglobin subunit beta-2 (ba2) from Danio rerio (Zebrafish).